A 142-amino-acid polypeptide reads, in one-letter code: Large ribosomal subunit protein uL13 (142 aa).

This sequence belongs to the universal ribosomal protein uL13 family. In terms of assembly, part of the 50S ribosomal subunit.

Its function is as follows. This protein is one of the early assembly proteins of the 50S ribosomal subunit, although it is not seen to bind rRNA by itself. It is important during the early stages of 50S assembly. This Coxiella burnetii (strain CbuG_Q212) (Coxiella burnetii (strain Q212)) protein is Large ribosomal subunit protein uL13.